A 396-amino-acid polypeptide reads, in one-letter code: 1-deoxy-D-xylulose 5-phosphate reductoisomerase (396 aa).

NADPH is bound by residues Thr-10, Gly-11, Ser-12, Ile-13, Gln-38, and Asn-124. A 1-deoxy-D-xylulose 5-phosphate-binding site is contributed by Lys-125. Residue Glu-126 participates in NADPH binding. Asp-150 contacts Mn(2+). 1-deoxy-D-xylulose 5-phosphate is bound by residues Ser-151, Glu-152, Ser-179, and His-202. Glu-152 is a Mn(2+) binding site. Gly-208 is an NADPH binding site. The 1-deoxy-D-xylulose 5-phosphate site is built by Ser-215, Asn-220, Lys-221, and Glu-224. A Mn(2+)-binding site is contributed by Glu-224.

The protein belongs to the DXR family. The cofactor is Mg(2+). Requires Mn(2+) as cofactor.

It carries out the reaction 2-C-methyl-D-erythritol 4-phosphate + NADP(+) = 1-deoxy-D-xylulose 5-phosphate + NADPH + H(+). The protein operates within isoprenoid biosynthesis; isopentenyl diphosphate biosynthesis via DXP pathway; isopentenyl diphosphate from 1-deoxy-D-xylulose 5-phosphate: step 1/6. Catalyzes the NADPH-dependent rearrangement and reduction of 1-deoxy-D-xylulose-5-phosphate (DXP) to 2-C-methyl-D-erythritol 4-phosphate (MEP). The protein is 1-deoxy-D-xylulose 5-phosphate reductoisomerase of Ralstonia pickettii (strain 12J).